The primary structure comprises 318 residues: Phosphatidylglycerol--prolipoprotein diacylglyceryl transferase (318 aa).

The next 7 membrane-spanning stretches (helical) occupy residues 23–43 (PLTI…GAWL), 59–79 (MDII…YHVI), 98–118 (IWEG…GAAI), 124–146 (GVRL…AMGR), 192–212 (FQPT…LLVF), 219–239 (LGAG…RFIF), and 253–273 (LRVN…VFLI). Arg-146 contributes to the a 1,2-diacyl-sn-glycero-3-phospho-(1'-sn-glycerol) binding site. The span at 293–312 (FDTRANGHDPEKHDETDGKG) shows a compositional bias: basic and acidic residues. Positions 293-318 (FDTRANGHDPEKHDETDGKGNRHHVP) are disordered.

It belongs to the Lgt family.

It is found in the cell membrane. The catalysed reaction is L-cysteinyl-[prolipoprotein] + a 1,2-diacyl-sn-glycero-3-phospho-(1'-sn-glycerol) = an S-1,2-diacyl-sn-glyceryl-L-cysteinyl-[prolipoprotein] + sn-glycerol 1-phosphate + H(+). It functions in the pathway protein modification; lipoprotein biosynthesis (diacylglyceryl transfer). Catalyzes the transfer of the diacylglyceryl group from phosphatidylglycerol to the sulfhydryl group of the N-terminal cysteine of a prolipoprotein, the first step in the formation of mature lipoproteins. The chain is Phosphatidylglycerol--prolipoprotein diacylglyceryl transferase from Paenarthrobacter aurescens (strain TC1).